The following is a 49-amino-acid chain: Large ribosomal subunit protein bL33B (49 aa).

It belongs to the bacterial ribosomal protein bL33 family.

The chain is Large ribosomal subunit protein bL33B from Bacillus velezensis (strain DSM 23117 / BGSC 10A6 / LMG 26770 / FZB42) (Bacillus amyloliquefaciens subsp. plantarum).